The chain runs to 129 residues: MQSPLTIPVPVPVLRLPRGPDGFSRGFASDGRRTILRPEVGEGHIQDPPESQEQRARATLRERYLRSLLAMVGHPVSFTLHEGVHVTAQFGATDLDVANFYVSQLQTPIGVQAEALLRCSDIISYSFKL.

Position 1 is an N-acetylmethionine (Met-1). The region spanning 1–31 (MQSPLTIPVPVPVLRLPRGPDGFSRGFASDG) is the SUZ-C domain. In terms of domain architecture, Sm spans 63-129 (RYLRSLLAMV…SDIISYSFKL (67 aa)).

Belongs to the gemin-7 family. Part of the core SMN complex that contains SMN1, GEMIN2/SIP1, DDX20/GEMIN3, GEMIN4, GEMIN5, GEMIN6, GEMIN7, GEMIN8 and STRAP/UNRIP. Part of the SMN-Sm complex that contains SMN1, GEMIN2/SIP1, DDX20/GEMIN3, GEMIN4, GEMIN5, GEMIN6, GEMIN7, GEMIN8, STRAP/UNRIP and the Sm proteins SNRPB, SNRPD1, SNRPD2, SNRPD3, SNRPE, SNRPF and SNRPG. Interacts with GEMIN6; the interaction is direct. Interacts with STRAP/UNRIP; the interaction is direct. Interacts with GEMIN8; the interaction is direct. Interacts with SNRPB, SNRPD2, SNRPD3 and SNRPE; the interaction is direct.

The protein localises to the nucleus. Its subcellular location is the nucleoplasm. It is found in the gem. It localises to the cytoplasm. Its function is as follows. The SMN complex catalyzes the assembly of small nuclear ribonucleoproteins (snRNPs), the building blocks of the spliceosome, and thereby plays an important role in the splicing of cellular pre-mRNAs. Most spliceosomal snRNPs contain a common set of Sm proteins SNRPB, SNRPD1, SNRPD2, SNRPD3, SNRPE, SNRPF and SNRPG that assemble in a heptameric protein ring on the Sm site of the small nuclear RNA to form the core snRNP (Sm core). In the cytosol, the Sm proteins SNRPD1, SNRPD2, SNRPE, SNRPF and SNRPG are trapped in an inactive 6S pICln-Sm complex by the chaperone CLNS1A that controls the assembly of the core snRNP. To assemble core snRNPs, the SMN complex accepts the trapped 5Sm proteins from CLNS1A forming an intermediate. Binding of snRNA inside 5Sm triggers eviction of the SMN complex, thereby allowing binding of SNRPD3 and SNRPB to complete assembly of the core snRNP. The protein is Gem-associated protein 7 (Gemin7) of Mus musculus (Mouse).